Reading from the N-terminus, the 212-residue chain is ATP synthase subunit 5, mitochondrial (212 aa).

The N-terminal 17 residues, 1–17, are a transit peptide targeting the mitochondrion; that stretch reads MFNRVFTRSFASSLRAA.

This sequence belongs to the ATPase delta chain family. F-type ATPases have 2 components, CF(1) - the catalytic core - and CF(0) - the membrane proton channel. CF(1) has five subunits: alpha(3), beta(3), gamma(1), delta(1), epsilon(1). CF(0) has three main subunits: a, b and c.

Its subcellular location is the mitochondrion. It is found in the mitochondrion inner membrane. Functionally, mitochondrial membrane ATP synthase (F(1)F(0) ATP synthase or Complex V) produces ATP from ADP in the presence of a proton gradient across the membrane which is generated by electron transport complexes of the respiratory chain. F-type ATPases consist of two structural domains, F(1) - containing the extramembraneous catalytic core and F(0) - containing the membrane proton channel, linked together by a central stalk and a peripheral stalk. During catalysis, ATP synthesis in the catalytic domain of F(1) is coupled via a rotary mechanism of the central stalk subunits to proton translocation. Part of the complex F(0) domain and the peripheric stalk, which acts as a stator to hold the catalytic alpha(3)beta(3) subcomplex and subunit a/ATP6 static relative to the rotary elements. The polypeptide is ATP synthase subunit 5, mitochondrial (ATP5) (Saccharomyces cerevisiae (strain ATCC 204508 / S288c) (Baker's yeast)).